We begin with the raw amino-acid sequence, 485 residues long: Ribulose bisphosphate carboxylase large chain (485 aa).

Substrate is bound by residues asparagine 124 and threonine 174. Lysine 176 serves as the catalytic Proton acceptor. Lysine 178 serves as a coordination point for substrate. Mg(2+) contacts are provided by lysine 202, aspartate 204, and glutamate 205. An N6-carboxylysine modification is found at lysine 202. Histidine 294 functions as the Proton acceptor in the catalytic mechanism. Substrate-binding residues include arginine 295, histidine 327, and serine 379.

It belongs to the RuBisCO large chain family. Type I subfamily. As to quaternary structure, heterohexadecamer of 8 large chains and 8 small chains. Requires Mg(2+) as cofactor.

The catalysed reaction is 2 (2R)-3-phosphoglycerate + 2 H(+) = D-ribulose 1,5-bisphosphate + CO2 + H2O. It catalyses the reaction D-ribulose 1,5-bisphosphate + O2 = 2-phosphoglycolate + (2R)-3-phosphoglycerate + 2 H(+). In terms of biological role, ruBisCO catalyzes two reactions: the carboxylation of D-ribulose 1,5-bisphosphate, the primary event in carbon dioxide fixation, as well as the oxidative fragmentation of the pentose substrate. Both reactions occur simultaneously and in competition at the same active site. The protein is Ribulose bisphosphate carboxylase large chain of Rhodopseudomonas palustris (strain HaA2).